Consider the following 997-residue polypeptide: Serine-repeat antigen protein 5 (997 aa).

The first 22 residues, 1 to 22 (MKSYISLFFILCVIFNKNVIKC), serve as a signal peptide directing secretion. Disordered stretches follow at residues 26–107 (SQTG…EKQD) and 181–252 (LPSN…PRNL). Residues 30–51 (NTGGGQAGNTGGDQAGSTGGSP) are compositionally biased toward gly residues. The span at 52–67 (QGSTGASPQGSTGASP) shows a compositional bias: low complexity. Residues 68-84 (QGSTGASQPGSSEPSNP) show a composition bias toward polar residues. 3 stretches are compositionally biased toward low complexity: residues 85–103 (VSSGHSVSTVSVSQTSTSS), 183–196 (SNGTTGEQGSSTGT), and 205–235 (SDSSSSSSSSSSSSSSSSSSSSSSSSSSSES). Ser183 is subject to Phosphoserine. N-linked (GlcNAc...) asparagine glycosylation is present at Asn184. The interval 216 to 253 (SSSSSSSSSSSSSSSSSSESLPANGPDSPTVKPPRNLQ) is interaction with PTKL. N-linked (GlcNAc...) asparagine glycosylation is present at Asn318. The tract at residues 373–390 (YKYLSEDIVSKFKEIKAE) is interaction with host VTN. Cysteines 445 and 497 form a disulfide. A Phosphothreonine; by CPK1 modification is found at Thr549. 5 disulfide bridges follow: Cys567-Cys572, Cys581-Cys610, Cys593-Cys636, Cys627-Cys672, and Cys755-Cys809. The interval 579 to 997 (NNCISNLQVE…TNNECYFCYV (419 aa)) is thiol-protease-like. Active-site residues include His762 and Asn787. A glycan (N-linked (GlcNAc...) asparagine) is linked at Asn828. Residues 843–886 (KASPEFYHNLYFKNFNVGKKNLFSEKEDNENNKKLGNNYIIFGQ) constitute a propeptide, inhibition peptide. Ser866 is subject to Phosphoserine.

Belongs to the peptidase C1 family. In terms of assembly, may interact (via C-terminus) with PTKL (via SAM domain). As to quaternary structure, interacts (via C-terminus) with human VTN (via hemopexin repeat 2); may form heterotetramers of two VTN and SERA5 P47 heterodimers; the interaction may protect merozoites from phagocytosis by host monocytes; VTN glycosylation appears to be dispensable for the interaction. Monomer. Interacts with kinase CPK1/CDPK1 at the schizont stage. Phosphorylation by CPK1/CDPK1 increases SERA5 protease activity towards a synthetic peptide in vitro. In terms of processing, just prior to merozoite egress from host erythrocytes, proteolytically cleaved into multiple fragments. Cleaved by SUB1 into p47 and p73, p73 is further cleaved by SUB1 into p56 and p18 and p56 is further processed into p50 by an unidentified protease. p47 remains covalently associated with p18 via disulfide bond. p47 can be processed into p25n and p25c by SUB1. p25c and p25n remain associated with p18. Proteolytic processing is essential for merozoite egress from host erythrocytes. The cleavage of the propeptide to produce p50 is necessary for protease activity and to promote merozoite egress.

It localises to the parasitophorous vacuole. The protein localises to the secreted. Its subcellular location is the cell membrane. Functionally, plays an essential role during the asexual blood stage development by controlling the kinetics of merozoite egress from host erythrocytes. Specifically, prevents premature rupture of the parasitophorous vacuole and host erythrocyte membranes. May prevent merozoite phagocytosis by host monocytes via interaction with host VTN at the merozoite surface. Plays a role in parasite growth. In terms of biological role, protease activity is controversial. Has been shown in a number of studies to have protease activity towards a synthetic peptide in vitro. Has also been shown to lack protease activity towards a synthetic peptide in vitro. This is Serine-repeat antigen protein 5 from Plasmodium falciparum (isolate 3D7).